Reading from the N-terminus, the 333-residue chain is Putative F-box protein At4g11580 (333 aa).

An F-box domain is found at 11-58 (VSEWADLNKDILELIFNKLDVMDITMGASRVCISWFLASHNKTLWNTV).

This is Putative F-box protein At4g11580 from Arabidopsis thaliana (Mouse-ear cress).